Reading from the N-terminus, the 296-residue chain is Small ribosomal subunit protein uS2m (296 aa).

The disordered stretch occupies residues Q274–L296.

The protein belongs to the universal ribosomal protein uS2 family. Component of the mitochondrial small ribosomal subunit (mt-SSU). Mature mammalian 55S mitochondrial ribosomes consist of a small (28S) and a large (39S) subunit. The 28S small subunit contains a 12S ribosomal RNA (12S mt-rRNA) and 30 different proteins. The 39S large subunit contains a 16S rRNA (16S mt-rRNA), a copy of mitochondrial valine transfer RNA (mt-tRNA(Val)), which plays an integral structural role, and 52 different proteins.

It localises to the mitochondrion. Required for mitoribosome formation and stability, and mitochondrial translation. The sequence is that of Small ribosomal subunit protein uS2m (MRPS2) from Homo sapiens (Human).